A 711-amino-acid polypeptide reads, in one-letter code: Progesterone receptor (711 aa).

The interval 1–347 (MEDKSKQCLQ…YGFDALPRKI (347 aa)) is modulating, Pro-Rich. 2 NR C4-type zinc fingers span residues 348–368 (CLICSDEASGCHYGALTCGSC) and 384–408 (CAGRNDCIGDKIRRKNCPSCRLKKC). Residues 348-420 (CLICSDEASG…AGMVLGGRKF (73 aa)) constitute a DNA-binding region (nuclear receptor). An NR LBD domain is found at 457 to 691 (QEVQYFPELL…EFPEMMTEVI (235 aa)).

It belongs to the nuclear hormone receptor family. NR3 subfamily. In terms of tissue distribution, expressed in all tissues examined: highly expressed in testis and brain. Also expressed in heart, lung, liver, kidney, stomach and small intestine.

It localises to the nucleus. In terms of biological role, the steroid hormones and their receptors are involved in the regulation of eukaryotic gene expression and affect cellular proliferation and differentiation in target tissues. This Rana dybowskii (Dybovsky's frog) protein is Progesterone receptor (pgr).